The sequence spans 475 residues: C3a anaphylatoxin chemotactic receptor (475 aa).

Residues 1–23 (MESSSAETNSTGLHLEPQYQPET) lie on the Extracellular side of the membrane. Asn9 carries an N-linked (GlcNAc...) asparagine glycan. Residues 24–46 (ILAMAILGLTFVLGLPGNGLVLW) form a helical membrane-spanning segment. The Cytoplasmic segment spans residues 47–57 (VAGLKMRRTVN). Residues 58-80 (TVWFLHLTVADFVCCLSLPFSMA) form a helical membrane-spanning segment. At 81–96 (HLALRGYWPYGEILCK) the chain is on the extracellular side. Cys95 and Cys172 are oxidised to a cystine. The chain crosses the membrane as a helical span at residues 97-118 (FIPTVIIFNMFASVFLLTAISL). The Cytoplasmic portion of the chain corresponds to 119 to 139 (DRCLMVLKPIWCQNHRNVRTA). Residues 140–160 (CIICGCIWLVAFVLCIPVFVY) form a helical membrane-spanning segment. The Extracellular portion of the chain corresponds to 161–331 (RETFTLENHT…RLLKVITFTR (171 aa)). Residue Asn168 is glycosylated (N-linked (GlcNAc...) asparagine). Tyr174 and Tyr183 each carry sulfotyrosine. N-linked (GlcNAc...) asparagine glycosylation is found at Asn273 and Asn292. A helical membrane pass occupies residues 332–351 (LVVGFLLPMIIMVACYTLII). The Cytoplasmic segment spans residues 352–368 (FRMRRVRVVKSWNKALH). The chain crosses the membrane as a helical span at residues 369–391 (LAMVVVTIFLICWAPYHVFGVLI). Residues 392–408 (LFINPESRVGAALLSWD) are Extracellular-facing. Residues 409 to 429 (HVSIALASANSCFNPFLYALL) form a helical membrane-spanning segment. The Cytoplasmic portion of the chain corresponds to 430 to 475 (GRDLRKRVRQSMKGILEAAFSEDISKSTSFIQAKAFSEKHSLSTNV). Position 450 is a phosphoserine (Ser450).

The protein belongs to the G-protein coupled receptor 1 family. As to quaternary structure, interacts with VGF-derived peptide TLQP-21. As to expression, expressed in the heart, kidney, lung, liver, peritoneal macrophages and spleen.

It is found in the cell membrane. Functionally, receptor for the chemotactic and inflammatory peptide anaphylatoxin C3a. This receptor stimulates chemotaxis, granule enzyme release and superoxide anion production. The protein is C3a anaphylatoxin chemotactic receptor (C3AR1) of Cavia porcellus (Guinea pig).